A 481-amino-acid polypeptide reads, in one-letter code: Argininosuccinate synthase (481 aa).

ATP-binding positions include 17-25 (AFSGGLDTS) and alanine 43. Tyrosine 99 contacts L-citrulline. ATP contacts are provided by glycine 129 and threonine 131. L-aspartate-binding residues include threonine 131, asparagine 135, and aspartate 136. Residue asparagine 135 coordinates L-citrulline. Residue aspartate 136 coordinates ATP. The L-citrulline site is built by arginine 139 and serine 192. Aspartate 194 is an ATP binding site. The L-citrulline site is built by threonine 201, glutamate 203, and glutamate 280.

Belongs to the argininosuccinate synthase family. Type 2 subfamily. Homotetramer.

It localises to the cytoplasm. The catalysed reaction is L-citrulline + L-aspartate + ATP = 2-(N(omega)-L-arginino)succinate + AMP + diphosphate + H(+). Its pathway is amino-acid biosynthesis; L-arginine biosynthesis; L-arginine from L-ornithine and carbamoyl phosphate: step 2/3. The protein is Argininosuccinate synthase (argG) of Streptomyces coelicolor (strain ATCC BAA-471 / A3(2) / M145).